The following is a 596-amino-acid chain: Linalool synthase TPS3, chloroplastic (596 aa).

A chloroplast-targeting transit peptide spans 1 to 39 (MISSLNPLFTTHRSGVIAQQFFASSAAASINSVSSLKIA). (2E)-geranyl diphosphate contacts are provided by Arg-308, Asp-345, Asp-349, Arg-486, and Asn-489. Residues Asp-345 and Asp-349 each contribute to the Mg(2+) site. A DDXXD motif motif is present at residues 345 to 349 (DDIYD). Mg(2+) is bound by residues Asn-489, Thr-493, and Ser-497.

This sequence belongs to the terpene synthase family. Tpsb subfamily. In terms of assembly, monomer. The cofactor is Mg(2+). It depends on Mn(2+) as a cofactor. In terms of tissue distribution, expressed in flowers and fruits.

Its subcellular location is the plastid. It localises to the chloroplast. The enzyme catalyses (2E)-geranyl diphosphate = beta-myrcene + diphosphate. It catalyses the reaction (2E)-geranyl diphosphate + H2O = linalool + diphosphate. It carries out the reaction (2E)-geranyl diphosphate = (Z)-beta-ocimene + diphosphate. The catalysed reaction is (2E)-geranyl diphosphate = (E)-beta-ocimene + diphosphate. The protein operates within secondary metabolite biosynthesis; terpenoid biosynthesis. Functionally, monoterpene synthase (mono-TPS) involved in the biosynthesis of monoterpenes natural products, constituent of coffee beverage aroma. Catalyzes the conversion of (2E)-geranyl diphosphate (GPP) into linalool and beta-myrcene, and, as minor products, cis-ocimene and trans-ocimene. Not able to use geranylgeranyl pyrophosphate (GGPP) and farnesyl pyrophosphate (FPP) as substrates. The polypeptide is Linalool synthase TPS3, chloroplastic (Coffea arabica (Arabian coffee)).